Here is a 358-residue protein sequence, read N- to C-terminus: DNA polymerase IV (358 aa).

The UmuC domain maps to 6-187 (IIHIDMDYFF…LDIGDFPGVG (182 aa)). Residues Asp-10 and Asp-105 each coordinate Mg(2+). Glu-106 is a catalytic residue.

This sequence belongs to the DNA polymerase type-Y family. Monomer. Requires Mg(2+) as cofactor.

The protein resides in the cytoplasm. It carries out the reaction DNA(n) + a 2'-deoxyribonucleoside 5'-triphosphate = DNA(n+1) + diphosphate. Its function is as follows. Poorly processive, error-prone DNA polymerase involved in untargeted mutagenesis. Copies undamaged DNA at stalled replication forks, which arise in vivo from mismatched or misaligned primer ends. These misaligned primers can be extended by PolIV. Exhibits no 3'-5' exonuclease (proofreading) activity. May be involved in translesional synthesis, in conjunction with the beta clamp from PolIII. The protein is DNA polymerase IV of Staphylococcus haemolyticus (strain JCSC1435).